The following is a 247-amino-acid chain: E3 SUMO-protein ligase NSE2 (247 aa).

Position 1 is an N-acetylmethionine (methionine 1). Glycyl lysine isopeptide (Lys-Gly) (interchain with G-Cter in SUMO2) cross-links involve residues lysine 90 and lysine 107. Position 116 is a phosphoserine (serine 116). Residues lysine 125 and lysine 130 each participate in a glycyl lysine isopeptide (Lys-Gly) (interchain with G-Cter in SUMO2) cross-link. The SP-RING-type zinc-finger motif lies at 154–240 (MDEDMIVTQS…LRRAIESHNK (87 aa)). The Zn(2+) site is built by cysteine 185, histidine 187, cysteine 210, and cysteine 215.

This sequence belongs to the NSE2 family. In terms of assembly, component of the SMC5-SMC6 complex which consists at least of SMC5, SMC6, NSMCE2, NSMCE1, NSMCE4A or EID3 and NSMCE3. In terms of processing, sumoylated, possibly via autosumoylation.

Its subcellular location is the nucleus. The protein localises to the chromosome. It is found in the telomere. The protein resides in the PML body. The protein operates within protein modification; protein sumoylation. In terms of biological role, E3 SUMO-protein ligase component of the SMC5-SMC6 complex, a complex involved in DNA double-strand break repair by homologous recombination. Is not be required for the stability of the complex. The complex may promote sister chromatid homologous recombination by recruiting the SMC1-SMC3 cohesin complex to double-strand breaks. Acts as an E3 ligase mediating SUMO attachment to various proteins such as SMC6L1 and TSNAX, the shelterin complex subunits TERF1, TERF2, TINF2 and TERF2IP, RAD51AP1, and maybe the cohesin components RAD21 and STAG2. Required for recruitment of telomeres to PML nuclear bodies. Required for sister chromatid cohesion during prometaphase and mitotic progression. The sequence is that of E3 SUMO-protein ligase NSE2 (Nsmce2) from Rattus norvegicus (Rat).